The following is a 157-amino-acid chain: ATP synthase subunit b (157 aa).

The chain crosses the membrane as a helical span at residues 7–27; that stretch reads LIAQLVVFFILAWVTMKFVWP.

This sequence belongs to the ATPase B chain family. As to quaternary structure, F-type ATPases have 2 components, F(1) - the catalytic core - and F(0) - the membrane proton channel. F(1) has five subunits: alpha(3), beta(3), gamma(1), delta(1), epsilon(1). F(0) has three main subunits: a(1), b(2) and c(10-14). The alpha and beta chains form an alternating ring which encloses part of the gamma chain. F(1) is attached to F(0) by a central stalk formed by the gamma and epsilon chains, while a peripheral stalk is formed by the delta and b chains.

The protein localises to the cell inner membrane. F(1)F(0) ATP synthase produces ATP from ADP in the presence of a proton or sodium gradient. F-type ATPases consist of two structural domains, F(1) containing the extramembraneous catalytic core and F(0) containing the membrane proton channel, linked together by a central stalk and a peripheral stalk. During catalysis, ATP synthesis in the catalytic domain of F(1) is coupled via a rotary mechanism of the central stalk subunits to proton translocation. Its function is as follows. Component of the F(0) channel, it forms part of the peripheral stalk, linking F(1) to F(0). The protein is ATP synthase subunit b of Aromatoleum aromaticum (strain DSM 19018 / LMG 30748 / EbN1) (Azoarcus sp. (strain EbN1)).